The primary structure comprises 143 residues: Small ribosomal subunit protein uS12 (143 aa).

Positions 1–19 (MGKPRGLRTARKHVNHRRD) are enriched in basic residues. A disordered region spans residues 1–23 (MGKPRGLRTARKHVNHRRDQRWA). A 3-hydroxyproline modification is found at P62.

It belongs to the universal ribosomal protein uS12 family. As to quaternary structure, component of the 40S small ribosomal subunit. In terms of processing, hydroxylation at Pro-62 affects translation termination efficiency.

It localises to the cytoplasm. The protein localises to the cytosol. The protein resides in the rough endoplasmic reticulum. This is Small ribosomal subunit protein uS12 (RpS23) from Drosophila melanogaster (Fruit fly).